Consider the following 1076-residue polypeptide: Inositol-1,4,5-trisphosphate 5-phosphatase 1 (1076 aa).

The SAC domain maps to 144-474 (LRKLLTNGSF…GDALARIYTG (331 aa)). A catalytic region spans residues 534-880 (YDPIHEYVNH…QEVRDASQTS (347 aa)). 2 disordered regions span residues 930-958 (AAPP…DWIS) and 977-1076 (LSPA…KPLV). 2 stretches are compositionally biased toward low complexity: residues 977-1004 (LSPA…IKPN) and 1025-1040 (SGSS…LTPV). Residues 1065–1076 (PEESSISWKPLV) are compositionally biased toward polar residues.

This sequence belongs to the synaptojanin family. In the central section; belongs to the inositol 1,4,5-trisphosphate 5-phosphatase family. It depends on Mg(2+) as a cofactor.

It localises to the cytoplasm. It catalyses the reaction a 1,2-diacyl-sn-glycero-3-phospho-(1D-myo-inositol-4,5-bisphosphate) + H2O = a 1,2-diacyl-sn-glycero-3-phospho-(1D-myo-inositol 4-phosphate) + phosphate. Controls the cellular levels and subcellular distribution of phosphatidylinositol 3-phosphate and phosphatidylinositol 4,5-bisphosphate. Involved in distinct membrane trafficking and signal transduction pathways. Highly active against a range of soluble and lipid inositol phosphates. Active in dephosphorylating the 5-position of Ins(1,4,5)P3 and Ins(1,3,4,5)P4 and to a lesser extent Ins(1,4,5,6)P4. The enzyme is also active against PI(4,5)P2 presented in sonicated vesicles and Triton mixed micelles, and somewhat less active against PI(3,5)P2 in unilamellar vesicles. Activity against PI(3,5)P2 drops sharply when this substrate is presented in mixed micelles. Also hydrolyzes PIP3 to produce PI(3,4)P2. The chain is Inositol-1,4,5-trisphosphate 5-phosphatase 1 (syj1) from Schizosaccharomyces pombe (strain 972 / ATCC 24843) (Fission yeast).